The chain runs to 356 residues: UDP-N-acetylglucosamine--N-acetylmuramyl-(pentapeptide) pyrophosphoryl-undecaprenol N-acetylglucosamine transferase (356 aa).

Residues 12–14 (TGG), Asn-124, Arg-163, Ser-188, Ile-242, and Gln-287 contribute to the UDP-N-acetyl-alpha-D-glucosamine site.

It belongs to the glycosyltransferase 28 family. MurG subfamily.

The protein resides in the cell inner membrane. The enzyme catalyses di-trans,octa-cis-undecaprenyl diphospho-N-acetyl-alpha-D-muramoyl-L-alanyl-D-glutamyl-meso-2,6-diaminopimeloyl-D-alanyl-D-alanine + UDP-N-acetyl-alpha-D-glucosamine = di-trans,octa-cis-undecaprenyl diphospho-[N-acetyl-alpha-D-glucosaminyl-(1-&gt;4)]-N-acetyl-alpha-D-muramoyl-L-alanyl-D-glutamyl-meso-2,6-diaminopimeloyl-D-alanyl-D-alanine + UDP + H(+). It functions in the pathway cell wall biogenesis; peptidoglycan biosynthesis. Cell wall formation. Catalyzes the transfer of a GlcNAc subunit on undecaprenyl-pyrophosphoryl-MurNAc-pentapeptide (lipid intermediate I) to form undecaprenyl-pyrophosphoryl-MurNAc-(pentapeptide)GlcNAc (lipid intermediate II). In Pseudomonas fluorescens (strain Pf0-1), this protein is UDP-N-acetylglucosamine--N-acetylmuramyl-(pentapeptide) pyrophosphoryl-undecaprenol N-acetylglucosamine transferase.